The sequence spans 485 residues: Glycogen synthase (485 aa).

K20 is a binding site for ADP-alpha-D-glucose.

This sequence belongs to the glycosyltransferase 1 family. Bacterial/plant glycogen synthase subfamily.

The catalysed reaction is [(1-&gt;4)-alpha-D-glucosyl](n) + ADP-alpha-D-glucose = [(1-&gt;4)-alpha-D-glucosyl](n+1) + ADP + H(+). It participates in glycan biosynthesis; glycogen biosynthesis. Synthesizes alpha-1,4-glucan chains using ADP-glucose. This Vibrio vulnificus (strain YJ016) protein is Glycogen synthase.